Here is a 76-residue protein sequence, read N- to C-terminus: DNA-directed RNA polymerase subunit epsilon (76 aa).

The protein belongs to the RNA polymerase subunit epsilon family. RNAP is composed of a core of 2 alpha, a beta and a beta' subunit. The core is associated with a delta subunit, and at least one of epsilon or omega. When a sigma factor is associated with the core the holoenzyme is formed, which can initiate transcription.

It carries out the reaction RNA(n) + a ribonucleoside 5'-triphosphate = RNA(n+1) + diphosphate. Its function is as follows. A non-essential component of RNA polymerase (RNAP). This chain is DNA-directed RNA polymerase subunit epsilon, found in Streptococcus pyogenes serotype M1.